The primary structure comprises 490 residues: MKLKESQQQSNRLSNEDLVPLGQEKRTWKAMNFASIWMGCIHNIPTYATVGGLIAIGLSPWQVLAIIITASLILFGALALNGHAGTKYGLPFPVIIRASYGIYGANIPALLRAFTAIMWLGIQTFAGSTALNILLLNMWPGWGEIGGEWNILGIHLSGLLSFVFFWAIHLLVLHHGMESIKRFEVWAGPLVYLVFGGMVWWAVDIAGGLGPIYSQPGKFHTFSETFWPFAAGVTGIIGIWATLILNIPDFTRFAETQKEQIKGQFYGLPGTFALFAFASITVTSGSQVAFGEPIWDVVDILARFDNPYVIVLSVITLCIATISVNVAANIVSPAYDIANALPKYINFKRGSFITALLALFTVPWKLMESATSVYAFLGLIGGMLGPVAGVMMADYFIIRKRELSVDDLYSETGRYVYWKGYNYRAFAATMLGALISLIGMYVPVLKSLYDISWFVGVLISFLFYIVLMRVHPPASLAIETVEHAQVRQAE.

Helical transmembrane passes span 36 to 56, 60 to 80, 116 to 136, 151 to 171, 190 to 210, 225 to 245, 265 to 285, 308 to 328, 350 to 370, 373 to 393, 425 to 445, and 448 to 468; these read IWMG…LIAI, PWQV…ALAL, AIMW…ILLL, ILGI…IHLL, LVYL…GGLG, TFWP…TLIL, FYGL…VTSG, YVIV…NVAA, GSFI…MESA, VYAF…VMMA, AFAA…VPVL, and LYDI…IVLM.

It belongs to the purine-cytosine permease (2.A.39) family.

The protein resides in the cell membrane. It carries out the reaction (S)-allantoin(in) + H(+)(in) = (S)-allantoin(out) + H(+)(out). In terms of biological role, uptake of allantoin into the cell. Allantoin uptake is not dependent on sodium, and PucI is likely to be a proton-coupled symporter. Shows highest recognition for binding of allantoin, good recognition for binding of hydantoin, L-5-benzylhydantoin and 5-hydroxyhydantoin, and to a lesser extent for a range of nucleobases and nucleosides. In Bacillus subtilis (strain 168), this protein is Allantoin permease.